We begin with the raw amino-acid sequence, 131 residues long: UPF0102 protein RALTA_A3032 (131 aa).

Over residues 1–12 the composition is skewed to polar residues; the sequence is MMRSFKSTQEPS. Residues 1-21 form a disordered region; the sequence is MMRSFKSTQEPSRQARGAQAE.

The protein belongs to the UPF0102 family.

This Cupriavidus taiwanensis (strain DSM 17343 / BCRC 17206 / CCUG 44338 / CIP 107171 / LMG 19424 / R1) (Ralstonia taiwanensis (strain LMG 19424)) protein is UPF0102 protein RALTA_A3032.